Here is a 419-residue protein sequence, read N- to C-terminus: D-amino acid dehydrogenase (419 aa).

3–17 lines the FAD pocket; it reads VLVLGAGVAGVSSVW.

This sequence belongs to the DadA oxidoreductase family. It depends on FAD as a cofactor.

It carries out the reaction a D-alpha-amino acid + A + H2O = a 2-oxocarboxylate + AH2 + NH4(+). Its pathway is amino-acid degradation; D-alanine degradation; NH(3) and pyruvate from D-alanine: step 1/1. Its function is as follows. Oxidative deamination of D-amino acids. This Neisseria gonorrhoeae (strain ATCC 700825 / FA 1090) protein is D-amino acid dehydrogenase.